We begin with the raw amino-acid sequence, 338 residues long: Lipoate-protein ligase A (338 aa).

One can recognise a BPL/LPL catalytic domain in the interval 29–216 (PATQRVLFLW…AFFAHYGERV (188 aa)). Residues Arg-71, 76–79 (GAVF), and Lys-134 contribute to the ATP site. Lys-134 lines the (R)-lipoate pocket.

The protein belongs to the LplA family. As to quaternary structure, monomer.

It is found in the cytoplasm. The catalysed reaction is L-lysyl-[lipoyl-carrier protein] + (R)-lipoate + ATP = N(6)-[(R)-lipoyl]-L-lysyl-[lipoyl-carrier protein] + AMP + diphosphate + H(+). Its pathway is protein modification; protein lipoylation via exogenous pathway; protein N(6)-(lipoyl)lysine from lipoate: step 1/2. It participates in protein modification; protein lipoylation via exogenous pathway; protein N(6)-(lipoyl)lysine from lipoate: step 2/2. Catalyzes both the ATP-dependent activation of exogenously supplied lipoate to lipoyl-AMP and the transfer of the activated lipoyl onto the lipoyl domains of lipoate-dependent enzymes. The protein is Lipoate-protein ligase A of Escherichia coli O6:H1 (strain CFT073 / ATCC 700928 / UPEC).